A 379-amino-acid polypeptide reads, in one-letter code: Oxysterol-binding protein-related protein 4C (379 aa).

The protein belongs to the OSBP family. As to expression, expressed in flowers.

May be involved in the transport of sterols. In Arabidopsis thaliana (Mouse-ear cress), this protein is Oxysterol-binding protein-related protein 4C (ORP4C).